The following is a 260-amino-acid chain: Hemin import ATP-binding protein HmuV (260 aa).

Residues 3–239 (LHAQQISLSI…QRLSEVYGCD (237 aa)) form the ABC transporter domain. 35 to 42 (GPNGSGKS) is a binding site for ATP.

The protein belongs to the ABC transporter superfamily. Heme (hemin) importer (TC 3.A.1.14.5) family. As to quaternary structure, the complex is composed of two ATP-binding proteins (HmuV), two transmembrane proteins (HmuU) and a solute-binding protein (HmuT).

The protein localises to the cell inner membrane. Part of the ABC transporter complex HmuTUV involved in hemin import. Responsible for energy coupling to the transport system. The polypeptide is Hemin import ATP-binding protein HmuV (Ruegeria sp. (strain TM1040) (Silicibacter sp.)).